The following is a 138-amino-acid chain: ATP synthase epsilon chain (138 aa).

It belongs to the ATPase epsilon chain family. In terms of assembly, F-type ATPases have 2 components, CF(1) - the catalytic core - and CF(0) - the membrane proton channel. CF(1) has five subunits: alpha(3), beta(3), gamma(1), delta(1), epsilon(1). CF(0) has three main subunits: a, b and c.

Its subcellular location is the cell membrane. Produces ATP from ADP in the presence of a proton gradient across the membrane. The chain is ATP synthase epsilon chain (atpC) from Buchnera aphidicola subsp. Acyrthosiphon pisum (strain APS) (Acyrthosiphon pisum symbiotic bacterium).